The primary structure comprises 215 residues: Ribosomal RNA small subunit methyltransferase G (215 aa).

S-adenosyl-L-methionine is bound by residues glycine 82, methionine 87, valine 133–glutamate 134, and arginine 148.

It belongs to the methyltransferase superfamily. RNA methyltransferase RsmG family.

The protein localises to the cytoplasm. The catalysed reaction is guanosine(527) in 16S rRNA + S-adenosyl-L-methionine = N(7)-methylguanosine(527) in 16S rRNA + S-adenosyl-L-homocysteine. In terms of biological role, specifically methylates the N7 position of guanine in position 527 of 16S rRNA. The chain is Ribosomal RNA small subunit methyltransferase G from Stutzerimonas stutzeri (strain A1501) (Pseudomonas stutzeri).